We begin with the raw amino-acid sequence, 1279 residues long: ATP-dependent helicase/nuclease subunit A (1279 aa).

Positions 4–499 (TKWTDEQRQA…VKLFKNFRSR (496 aa)) constitute a UvrD-like helicase ATP-binding domain. 25-32 (AGAGAGKT) contacts ATP. The UvrD-like helicase C-terminal domain occupies 526-853 (EEALKVGASY…RIMSIHKSKG (328 aa)).

Belongs to the helicase family. AddA subfamily. In terms of assembly, heterodimer of AddA and AddB/RexB. It depends on Mg(2+) as a cofactor.

It catalyses the reaction Couples ATP hydrolysis with the unwinding of duplex DNA by translocating in the 3'-5' direction.. The catalysed reaction is ATP + H2O = ADP + phosphate + H(+). Functionally, the heterodimer acts as both an ATP-dependent DNA helicase and an ATP-dependent, dual-direction single-stranded exonuclease. Recognizes the chi site generating a DNA molecule suitable for the initiation of homologous recombination. The AddA nuclease domain is required for chi fragment generation; this subunit has the helicase and 3' -&gt; 5' nuclease activities. The sequence is that of ATP-dependent helicase/nuclease subunit A from Clostridium botulinum (strain Okra / Type B1).